A 1104-amino-acid polypeptide reads, in one-letter code: Extended synaptotagmin-1 (1104 aa).

Position 1 is an N-acetylmethionine (Met-1). Residues 1-38 are Cytoplasmic-facing; the sequence is MERSPGEGPSPSPTDQPSAPSDPTGQPPAAHAKPDPGS. The segment at 1–47 is disordered; it reads MERSPGEGPSPSPTDQPSAPSDPTGQPPAAHAKPDPGSGGQPAGPGA. Positions 15 to 24 are enriched in polar residues; that stretch reads DQPSAPSDPT. The span at 37–47 shows a compositional bias: gly residues; that stretch reads GSGGQPAGPGA. The chain crosses the membrane as a helical span at residues 39 to 59; the sequence is GGQPAGPGAAGEALAVLTSFG. Residues 60 to 62 lie on the Lumenal side of the membrane; that stretch reads KRL. The helical transmembrane segment at 63–83 threads the bilayer; it reads LVLIPVYLAGAVGLSVGFVLF. The Cytoplasmic portion of the chain corresponds to 84–1104; it reads GLALYLGWRR…LMDDKDKGSS (1021 aa). The stretch at 91–116 forms a coiled coil; that stretch reads WRRVRDEKERSLRAARQLLDDEEQLT. In terms of domain architecture, SMP-LTD spans 135-313; sequence DVEKAEWLNK…LPNRLLVPLV (179 aa). 4 consecutive C2 domains span residues 312–433, 460–580, 627–751, and 777–899; these read LVPD…DDWF, QVLQ…QLSS, SVDA…DEWL, and LEEV…TLNS. Position 324 is a phosphoserine; by CDK5 (Ser-324). The Ca(2+) site is built by Lys-344, Asp-345, Asp-357, Asp-404, Asp-406, Asp-408, Asp-410, and Asp-411. 3 disordered regions span residues 617-641, 813-833, and 924-950; these read VDSE…TPDS, RKGT…TSHK, and SHSY…VTSS. The residue at position 817 (Lys-817) is an N6-acetyllysine. Residues Ser-820 and Ser-941 each carry the phosphoserine modification. Positions 925–946 are enriched in low complexity; that stretch reads HSYSHSSSSLSEEPELSGGPPH. At Thr-948 the chain carries Phosphothreonine. Ser-949 and Ser-963 each carry phosphoserine. The C2 5 domain maps to 971–1093; it reads PLGQVKLTVW…DLSQGVARWY (123 aa). At Tyr-1009 the chain carries Phosphotyrosine. Residues 1018 to 1025 are required for phosphatidylinositol 4,5-bisphosphate-dependent location at the cell membrane; the sequence is KNRGTKRK. Ser-1034 carries the post-translational modification Phosphoserine.

It belongs to the extended synaptotagmin family. In terms of assembly, interacts with ESYT2 and ESYT3. Interacts with ADGRD1; inhibiting the G-protein-coupled receptor activity of ADGRD1. Interaction with ADGRD1 is abolished when cytosolic calcium increases, relieving ADGRD1 G-protein-coupled receptor activity. Interacts (phosphorylated form) with SLC2A4. Phosphorylated on Ser residues in insulin-treated adipocytes (in vitro); this promotes interaction with SLC2A4.

It localises to the endoplasmic reticulum membrane. The protein resides in the cell membrane. Functionally, binds calcium (via the C2 domains) and translocates to sites of contact between the endoplasmic reticulum and the cell membrane in response to increased cytosolic calcium levels. Helps tether the endoplasmic reticulum to the cell membrane and promotes the formation of appositions between the endoplasmic reticulum and the cell membrane. Acts as an inhibitor of ADGRD1 G-protein-coupled receptor activity in absence of cytosolic calcium. Binds glycerophospholipids in a barrel-like domain and may play a role in cellular lipid transport. In Pongo abelii (Sumatran orangutan), this protein is Extended synaptotagmin-1 (ESYT1).